The primary structure comprises 173 residues: Interferon gamma (173 aa).

Positions 1–22 are cleaved as a signal peptide; that stretch reads MNATHCILALQLCLLAISGCSS. A Pyrrolidone carboxylic acid modification is found at Q23. N38 and N105 each carry an N-linked (GlcNAc...) asparagine glycan.

This sequence belongs to the type II (or gamma) interferon family. Homodimer. Interacts with IFNGR1 (via extracellular domain); this interaction promotes IFNGR1 dimerization. In terms of tissue distribution, released primarily from activated T lymphocytes.

The protein resides in the secreted. Type II interferon produced by immune cells such as T-cells and NK cells that plays crucial roles in antimicrobial, antiviral, and antitumor responses by activating effector immune cells and enhancing antigen presentation. Primarily signals through the JAK-STAT pathway after interaction with its receptor IFNGR1 to affect gene regulation. Upon IFNG binding, IFNGR1 intracellular domain opens out to allow association of downstream signaling components JAK2, JAK1 and STAT1, leading to STAT1 activation, nuclear translocation and transcription of IFNG-regulated genes. Many of the induced genes are transcription factors such as IRF1 that are able to further drive regulation of a next wave of transcription. Plays a role in class I antigen presentation pathway by inducing a replacement of catalytic proteasome subunits with immunoproteasome subunits. In turn, increases the quantity, quality, and repertoire of peptides for class I MHC loading. Increases the efficiency of peptide generation also by inducing the expression of activator PA28 that associates with the proteasome and alters its proteolytic cleavage preference. Up-regulates as well MHC II complexes on the cell surface by promoting expression of several key molecules such as cathepsins B/CTSB, H/CTSH, and L/CTSL. Participates in the regulation of hematopoietic stem cells during development and under homeostatic conditions by affecting their development, quiescence, and differentiation. This chain is Interferon gamma (IFNG), found in Meriones unguiculatus (Mongolian jird).